We begin with the raw amino-acid sequence, 89 residues long: Small ribosomal subunit protein uS15 (89 aa).

Residues M1–A25 form a disordered region. The span at K8–A25 shows a compositional bias: polar residues.

The protein belongs to the universal ribosomal protein uS15 family. Part of the 30S ribosomal subunit. Forms a bridge to the 50S subunit in the 70S ribosome, contacting the 23S rRNA.

One of the primary rRNA binding proteins, it binds directly to 16S rRNA where it helps nucleate assembly of the platform of the 30S subunit by binding and bridging several RNA helices of the 16S rRNA. Its function is as follows. Forms an intersubunit bridge (bridge B4) with the 23S rRNA of the 50S subunit in the ribosome. In Synechococcus sp. (strain CC9902), this protein is Small ribosomal subunit protein uS15.